Reading from the N-terminus, the 115-residue chain is Large ribosomal subunit protein bL19 (115 aa).

It belongs to the bacterial ribosomal protein bL19 family.

Functionally, this protein is located at the 30S-50S ribosomal subunit interface and may play a role in the structure and function of the aminoacyl-tRNA binding site. This is Large ribosomal subunit protein bL19 from Koribacter versatilis (strain Ellin345).